The primary structure comprises 386 residues: Centrosomal protein of 44 kDa (386 aa).

Residues 11–194 form a binds with microtubules and centrioles region; that stretch reads RKLEQVLRSL…GVPEGTVTST (184 aa). A coiled-coil region spans residues 232–262; sequence ELTALQIALAECQEKLKKLTWIEKRLECLEA. Phosphoserine is present on S329. A coiled-coil region spans residues 359 to 382; that stretch reads SEETTMQKMERMKKMFEETAELLK.

Interacts with CROCC. Interacts with POC1B; the interaction is direct and recruits POC1B to centriolar microtubules. Binds to centriolar microtubules.

The protein localises to the cytoplasm. Its subcellular location is the cytoskeleton. It localises to the microtubule organizing center. It is found in the centrosome. The protein resides in the centriole. The protein localises to the spindle pole. Its subcellular location is the midbody. Functionally, centriole-enriched microtubule-binding protein involved in centriole biogenesis. In collaboration with CEP295 and POC1B, is required for the centriole-to-centrosome conversion by ensuring the formation of bona fide centriole wall. Functions as a linker component that maintains centrosome cohesion. Associates with CROCC and regulates its stability and localization to the centrosome. This Rattus norvegicus (Rat) protein is Centrosomal protein of 44 kDa (Cep44).